Here is a 344-residue protein sequence, read N- to C-terminus: tRNA N6-adenosine threonylcarbamoyltransferase (344 aa).

Positions 112 and 116 each coordinate Fe cation. Substrate is bound by residues 134–138, Asp167, Gly180, and Asn280; that span reads LASGG. Asp308 contributes to the Fe cation binding site.

The protein belongs to the KAE1 / TsaD family. Fe(2+) serves as cofactor.

It is found in the cytoplasm. It carries out the reaction L-threonylcarbamoyladenylate + adenosine(37) in tRNA = N(6)-L-threonylcarbamoyladenosine(37) in tRNA + AMP + H(+). In terms of biological role, required for the formation of a threonylcarbamoyl group on adenosine at position 37 (t(6)A37) in tRNAs that read codons beginning with adenine. Is involved in the transfer of the threonylcarbamoyl moiety of threonylcarbamoyl-AMP (TC-AMP) to the N6 group of A37, together with TsaE and TsaB. TsaD likely plays a direct catalytic role in this reaction. This is tRNA N6-adenosine threonylcarbamoyltransferase from Rickettsia massiliae (strain Mtu5).